Reading from the N-terminus, the 79-residue chain is Acyl carrier protein (79 aa).

Positions 2-77 (ESIEQRVKKI…QAVDYINSHG (76 aa)) constitute a Carrier domain. S37 is subject to O-(pantetheine 4'-phosphoryl)serine.

The protein belongs to the acyl carrier protein (ACP) family. In terms of processing, 4'-phosphopantetheine is transferred from CoA to a specific serine of apo-ACP by AcpS. This modification is essential for activity because fatty acids are bound in thioester linkage to the sulfhydryl of the prosthetic group.

The protein resides in the cytoplasm. Its pathway is lipid metabolism; fatty acid biosynthesis. Carrier of the growing fatty acid chain in fatty acid biosynthesis. The protein is Acyl carrier protein of Bordetella parapertussis (strain 12822 / ATCC BAA-587 / NCTC 13253).